A 274-amino-acid chain; its full sequence is Dermonecrotic toxin SdSicTox-betaIIB1aii (274 aa).

The active site involves His5. The Mg(2+) site is built by Glu25 and Asp27. His41 acts as the Nucleophile in catalysis. Disulfide bonds link Cys45/Cys51 and Cys47/Cys190. Residue Asp85 coordinates Mg(2+).

Belongs to the arthropod phospholipase D family. Class II subfamily. The cofactor is Mg(2+). As to expression, expressed by the venom gland.

It is found in the secreted. It catalyses the reaction an N-(acyl)-sphingosylphosphocholine = an N-(acyl)-sphingosyl-1,3-cyclic phosphate + choline. The enzyme catalyses an N-(acyl)-sphingosylphosphoethanolamine = an N-(acyl)-sphingosyl-1,3-cyclic phosphate + ethanolamine. It carries out the reaction a 1-acyl-sn-glycero-3-phosphocholine = a 1-acyl-sn-glycero-2,3-cyclic phosphate + choline. The catalysed reaction is a 1-acyl-sn-glycero-3-phosphoethanolamine = a 1-acyl-sn-glycero-2,3-cyclic phosphate + ethanolamine. Its function is as follows. Dermonecrotic toxins cleave the phosphodiester linkage between the phosphate and headgroup of certain phospholipids (sphingolipid and lysolipid substrates), forming an alcohol (often choline) and a cyclic phosphate. This toxin acts on sphingomyelin (SM). It may also act on ceramide phosphoethanolamine (CPE), lysophosphatidylcholine (LPC) and lysophosphatidylethanolamine (LPE), but not on lysophosphatidylserine (LPS), and lysophosphatidylglycerol (LPG). It acts by transphosphatidylation, releasing exclusively cyclic phosphate products as second products. Induces dermonecrosis, hemolysis, increased vascular permeability, edema, inflammatory response, and platelet aggregation. This chain is Dermonecrotic toxin SdSicTox-betaIIB1aii, found in Sicarius cf. damarensis (strain GJB-2008) (Six-eyed sand spider).